Reading from the N-terminus, the 541-residue chain is MLQLARFYSLARTKAIHSHGAPFRPEYALKCGLEIHTQLNTKNKLFSQSTNSATSLVDAPNHHTSYYDIALPGTQPVLNLEAILFAMKLSLALGSQVNSISQFDRKHYFYGDQPQGYQLTQHYRPFARGGKINLSKELDDIDESAKEIGILQLQIEQDTGKSHYTETDKDVITLVDLNRSNVPLIELVTKPDFSDIKQVRAFIKKYQNLVRHLHISSGDLETGAMRVDVNLSINEYARVELKNLPNTSSIINAIKYEYQRQVELISVGDTSSLMEPETRGWTGSSTVKLRSKETTIDYRYMPDPELPYINLAQDVISGVRGLMPQLPDDIMRMLMKKPYQLSLKDAKILTYNSNQNDMYNHEALRSYYLDTFREFSKLAGERSNAKLPTNWIIHEFLGDLNKLQIPLARAKEILPPPVFAQFLKLLHEEVISATSGKMLLFHILENFKQSNCQDLSIPDFSKLIEKFELHAINQVDPQELMDLCNDVIAQHTDDTFIRNLVTGKKKSSLKFLIGQGMRRSQGRIKANEFEKKFKEILNIQW.

Belongs to the GatB/GatE family. GatB subfamily. As to quaternary structure, subunit of the heterotrimeric GatFAB amidotransferase (AdT) complex, composed of A, B and F subunits.

The protein localises to the mitochondrion. It carries out the reaction L-glutamyl-tRNA(Gln) + L-glutamine + ATP + H2O = L-glutaminyl-tRNA(Gln) + L-glutamate + ADP + phosphate + H(+). In terms of biological role, allows the formation of correctly charged Gln-tRNA(Gln) through the transamidation of misacylated Glu-tRNA(Gln) in the mitochondria. The reaction takes place in the presence of glutamine and ATP through an activated gamma-phospho-Glu-tRNA(Gln). This Saccharomyces cerevisiae (strain RM11-1a) (Baker's yeast) protein is Glutamyl-tRNA(Gln) amidotransferase subunit B, mitochondrial.